The chain runs to 489 residues: Probable 26S proteasome non-ATPase regulatory subunit 3 (489 aa).

The tract at residues 1–23 (MTQDVEMKEVPAPAPSNSVTAAT) is disordered. Residues 241 to 422 (CRYLFYLGKI…GWMVSKETGD (182 aa)) enclose the PCI domain. The disordered stretch occupies residues 454 to 489 (PANSHKDKESAEKRRERQQQEQELAKHIAEEDDDEF). The segment covering 457–482 (SHKDKESAEKRRERQQQEQELAKHIA) has biased composition (basic and acidic residues).

This sequence belongs to the proteasome subunit S3 family. As to quaternary structure, the 26S proteasome is composed of a core protease, known as the 20S proteasome, capped at one or both ends by the 19S regulatory complex (RC). The RC is composed of at least 18 different subunits in two subcomplexes, the base and the lid, which form the portions proximal and distal to the 20S proteolytic core, respectively.

Its subcellular location is the nucleus. In terms of biological role, acts as a regulatory subunit of the 26 proteasome which is involved in the ATP-dependent degradation of ubiquitinated proteins. The protein is Probable 26S proteasome non-ATPase regulatory subunit 3 (21D7) of Daucus carota (Wild carrot).